The primary structure comprises 241 residues: Small ribosomal subunit protein uS2 (241 aa).

This sequence belongs to the universal ribosomal protein uS2 family.

In Yersinia pestis bv. Antiqua (strain Antiqua), this protein is Small ribosomal subunit protein uS2.